The primary structure comprises 521 residues: BAR/IMD domain-containing adapter protein 2 (521 aa).

The 250-residue stretch at 1 to 250 (MSLSRSEEMH…VQLMQQIASS (250 aa)) folds into the IMD domain. Residues 132-153 (DALDKCQAELKKLRKKSQGSKN) adopt a coiled-coil conformation. Phosphoserine is present on residues serine 262, serine 324, serine 326, and serine 337. The disordered stretch occupies residues 299-370 (VMNGVAGPDS…TLPRSSSMAA (72 aa)). Residues 321 to 335 (QPKSLSPPQSQSKLS) are compositionally biased toward low complexity. Threonine 341 is modified (phosphothreonine). The residue at position 347 (serine 347) is a Phosphoserine. Polar residues predominate over residues 349-368 (TPKNSYATTENKTLPRSSSM). At threonine 361 the chain carries Phosphothreonine. 4 positions are modified to phosphoserine: serine 367, serine 385, serine 396, and serine 455. One can recognise an SH3 domain in the interval 375 to 438 (NGRMRVKAIF…PFSYTRVLDS (64 aa)). Residues 445–480 (HMSLQQGKSSSTGNLLDKDDLAVPPPDYGTSSRAFP) form a disordered region. Residues 447–458 (SLQQGKSSSTGN) are compositionally biased toward polar residues.

Homodimer. Interacts with CDC42 and RAC1 that have been activated by GTP binding. Interacts with ATN1, ADGRB1, DIAPH1, EPS8, SHANK1, SHANK2, SHANK3, TIAM1, WASF1 and WASF2. Interacts with ENAH after recruitment of CDC42. Phosphorylated on tyrosine residues by INSR in response to insulin treatment.

The protein resides in the cytoplasm. Its subcellular location is the membrane. It localises to the cell projection. It is found in the filopodium. The protein localises to the ruffle. The protein resides in the cytoskeleton. Functionally, adapter protein that links membrane-bound small G-proteins to cytoplasmic effector proteins. Necessary for CDC42-mediated reorganization of the actin cytoskeleton and for RAC1-mediated membrane ruffling. Involved in the regulation of the actin cytoskeleton by WASF family members and the Arp2/3 complex. Plays a role in neurite growth. Acts syngeristically with ENAH to promote filipodia formation. Plays a role in the reorganization of the actin cytoskeleton in response to bacterial infection. Participates in actin bundling when associated with EPS8, promoting filopodial protrusions. The protein is BAR/IMD domain-containing adapter protein 2 (BAIAP2) of Cricetulus griseus (Chinese hamster).